Here is a 169-residue protein sequence, read N- to C-terminus: Lipoprotein signal peptidase (169 aa).

Transmembrane regions (helical) follow at residues 10 to 30 (LPWLWITVLVFVLDQLSKAFF), 40 to 60 (IVVIPDLFSWTLAYNTGAAFS), 68 to 88 (WQRWLFALIAIVVSAILVVWL), and 94 to 114 (GETWLAIALALVLGGALGNLY). Catalysis depends on residues Asp-124 and Asp-143. Residues 135-155 (YFPAFNLADSAITVGAVMLAL) form a helical membrane-spanning segment.

This sequence belongs to the peptidase A8 family.

It localises to the cell inner membrane. It catalyses the reaction Release of signal peptides from bacterial membrane prolipoproteins. Hydrolyzes -Xaa-Yaa-Zaa-|-(S,diacylglyceryl)Cys-, in which Xaa is hydrophobic (preferably Leu), and Yaa (Ala or Ser) and Zaa (Gly or Ala) have small, neutral side chains.. It participates in protein modification; lipoprotein biosynthesis (signal peptide cleavage). In terms of biological role, this protein specifically catalyzes the removal of signal peptides from prolipoproteins. In Pseudomonas aeruginosa (strain UCBPP-PA14), this protein is Lipoprotein signal peptidase.